A 305-amino-acid chain; its full sequence is Tyrosine recombinase XerC (305 aa).

A Core-binding (CB) domain is found at 2–88 (NQLELYIDTF…TLRSFYRFLE (87 aa)). The Tyr recombinase domain occupies 109–294 (PVPGFLYQEE…TKDHLREAYM (186 aa)). Active-site residues include Arg149, Lys173, His246, Arg249, and His272. Catalysis depends on Tyr281, which acts as the O-(3'-phospho-DNA)-tyrosine intermediate.

This sequence belongs to the 'phage' integrase family. XerC subfamily. Forms a cyclic heterotetrameric complex composed of two molecules of XerC and two molecules of XerD.

The protein resides in the cytoplasm. Its function is as follows. Site-specific tyrosine recombinase, which acts by catalyzing the cutting and rejoining of the recombining DNA molecules. The XerC-XerD complex is essential to convert dimers of the bacterial chromosome into monomers to permit their segregation at cell division. It also contributes to the segregational stability of plasmids. This is Tyrosine recombinase XerC from Oceanobacillus iheyensis (strain DSM 14371 / CIP 107618 / JCM 11309 / KCTC 3954 / HTE831).